The chain runs to 234 residues: Segregation and condensation protein A (234 aa).

Belongs to the ScpA family. As to quaternary structure, component of a cohesin-like complex composed of ScpA, ScpB and the Smc homodimer, in which ScpA and ScpB bind to the head domain of Smc. The presence of the three proteins is required for the association of the complex with DNA.

It localises to the cytoplasm. Functionally, participates in chromosomal partition during cell division. May act via the formation of a condensin-like complex containing Smc and ScpB that pull DNA away from mid-cell into both cell halves. This chain is Segregation and condensation protein A, found in Streptococcus pyogenes serotype M6 (strain ATCC BAA-946 / MGAS10394).